Here is a 418-residue protein sequence, read N- to C-terminus: Tyrosine--tRNA ligase (418 aa).

Residue tyrosine 34 coordinates L-tyrosine. Positions 39 to 48 (PTADSLHLGH) match the 'HIGH' region motif. L-tyrosine-binding residues include tyrosine 169 and glutamine 173. The 'KMSKS' region signature appears at 229–233 (KFGKS). Position 232 (lysine 232) interacts with ATP. In terms of domain architecture, S4 RNA-binding spans 352–418 (LNIVDMLVTA…GKKKYAVLTY (67 aa)).

It belongs to the class-I aminoacyl-tRNA synthetase family. TyrS type 1 subfamily. As to quaternary structure, homodimer.

Its subcellular location is the cytoplasm. It catalyses the reaction tRNA(Tyr) + L-tyrosine + ATP = L-tyrosyl-tRNA(Tyr) + AMP + diphosphate + H(+). In terms of biological role, catalyzes the attachment of tyrosine to tRNA(Tyr) in a two-step reaction: tyrosine is first activated by ATP to form Tyr-AMP and then transferred to the acceptor end of tRNA(Tyr). The sequence is that of Tyrosine--tRNA ligase from Streptococcus equi subsp. zooepidemicus (strain MGCS10565).